The primary structure comprises 226 residues: Orotate phosphoribosyltransferase (226 aa).

Position 30 (lysine 30) interacts with 5-phospho-alpha-D-ribose 1-diphosphate. 38–39 contributes to the orotate binding site; it reads FF. Residues 76–77, arginine 106, lysine 107, lysine 110, histidine 112, and 132–140 contribute to the 5-phospho-alpha-D-ribose 1-diphosphate site; these read YK and DDVMTAGTA. Orotate is bound by residues threonine 136 and arginine 164.

Belongs to the purine/pyrimidine phosphoribosyltransferase family. PyrE subfamily. In terms of assembly, homodimer.

It carries out the reaction orotidine 5'-phosphate + diphosphate = orotate + 5-phospho-alpha-D-ribose 1-diphosphate. Its pathway is pyrimidine metabolism; UMP biosynthesis via de novo pathway; UMP from orotate: step 1/2. Its function is as follows. Catalyzes the transfer of a ribosyl phosphate group from 5-phosphoribose 1-diphosphate to orotate, leading to the formation of orotidine monophosphate (OMP). This chain is Orotate phosphoribosyltransferase (URA5), found in Kluyveromyces lactis (strain ATCC 8585 / CBS 2359 / DSM 70799 / NBRC 1267 / NRRL Y-1140 / WM37) (Yeast).